The following is a 149-amino-acid chain: 18 kDa antigen 1 (149 aa).

The 111-residue stretch at 21–131 (TAARPAVMPM…KPRKIAVGRG (111 aa)) folds into the sHSP domain.

The protein belongs to the small heat shock protein (HSP20) family.

In terms of biological role, not known. This protein is one of the major immune reactive proteins in mycobacteria. The sequence is that of 18 kDa antigen 1 from Mycobacterium intracellulare.